The sequence spans 91 residues: Small ribosomal subunit protein uS19 (91 aa).

The protein belongs to the universal ribosomal protein uS19 family.

Its function is as follows. Protein S19 forms a complex with S13 that binds strongly to the 16S ribosomal RNA. This Burkholderia cenocepacia (strain HI2424) protein is Small ribosomal subunit protein uS19.